The sequence spans 142 residues: Dromaiocalcin-2 (142 aa).

Cystine bridges form between C6/C17, C34/C138, and C113/C130. The C-type lectin domain maps to 13–139; the sequence is FDGRCYGFFP…CSDRKPFICA (127 aa). A phosphoserine mark is found at S62 and S68.

A minor form with some unmodified Ser-68 and partial phosphorylation of Ser-66 may also occur.

It is found in the secreted. The protein resides in the extracellular space. It localises to the extracellular matrix. In Dromaius novaehollandiae (Emu), this protein is Dromaiocalcin-2.